A 293-amino-acid polypeptide reads, in one-letter code: ATP synthase gamma chain (293 aa).

It belongs to the ATPase gamma chain family. In terms of assembly, F-type ATPases have 2 components, CF(1) - the catalytic core - and CF(0) - the membrane proton channel. CF(1) has five subunits: alpha(3), beta(3), gamma(1), delta(1), epsilon(1). CF(0) has three main subunits: a, b and c.

The protein localises to the cell inner membrane. Its function is as follows. Produces ATP from ADP in the presence of a proton gradient across the membrane. The gamma chain is believed to be important in regulating ATPase activity and the flow of protons through the CF(0) complex. This chain is ATP synthase gamma chain, found in Sinorhizobium fredii (strain NBRC 101917 / NGR234).